Here is a 92-residue protein sequence, read N- to C-terminus: Ribonuclease P protein component 1 (92 aa).

Belongs to the eukaryotic/archaeal RNase P protein component 1 family. Consists of a catalytic RNA component and at least 4-5 protein subunits.

The protein resides in the cytoplasm. The enzyme catalyses Endonucleolytic cleavage of RNA, removing 5'-extranucleotides from tRNA precursor.. Its function is as follows. Part of ribonuclease P, a protein complex that generates mature tRNA molecules by cleaving their 5'-ends. In Desulfurococcus amylolyticus (strain DSM 18924 / JCM 16383 / VKM B-2413 / 1221n) (Desulfurococcus kamchatkensis), this protein is Ribonuclease P protein component 1.